We begin with the raw amino-acid sequence, 270 residues long: Molybdenum-pterin-binding protein MopB (270 aa).

2 Mop domains span residues 131 to 197 (RTSA…LLAG) and 203 to 269 (RLSV…ILAL).

It belongs to the ModE family.

The polypeptide is Molybdenum-pterin-binding protein MopB (mopB) (Rhodobacter capsulatus (Rhodopseudomonas capsulata)).